A 183-amino-acid polypeptide reads, in one-letter code: NADH-ubiquinone oxidoreductase 20.8 kDa subunit (183 aa).

CHCH domains are found at residues 44 to 87 and 88 to 130; these read GARC…IADI and NKSC…LGLK. 4 short sequence motifs (cx9C motif) span residues 47-57, 69-79, 91-101, and 112-122; these read CRDYNDDFMQC, CLKEGRRVTRC, CLEEFRKHWTC, and CRPAEWKLNKC. Disulfide bonds link cysteine 47/cysteine 79, cysteine 57/cysteine 69, cysteine 91/cysteine 122, and cysteine 101/cysteine 112. A disordered region spans residues 161-183; it reads EPFVPPTQTGDNNKAPAAASSSS.

This sequence belongs to the complex I NDUFA8 subunit family. Complex I is composed of about 40 different subunits. This is a component of the hydrophobic fraction. Iron-sulfur cluster is required as a cofactor.

It localises to the mitochondrion inner membrane. Functionally, accessory subunit of the mitochondrial membrane respiratory chain NADH dehydrogenase (Complex I), that is believed not to be involved in catalysis. Complex I functions in the transfer of electrons from NADH to the respiratory chain. The immediate electron acceptor for the enzyme is believed to be ubiquinone. This chain is NADH-ubiquinone oxidoreductase 20.8 kDa subunit, found in Neurospora crassa (strain ATCC 24698 / 74-OR23-1A / CBS 708.71 / DSM 1257 / FGSC 987).